The following is a 423-amino-acid chain: Torsin-4A (423 aa).

The tract at residues 47–68 (PGGGPDVGTGAPRPGCSPRAPR) is disordered. 2 positions are modified to phosphoserine: Ser63 and Ser81. Thr89 is subject to Phosphothreonine. The residue at position 106 (Ser106) is a Phosphoserine. The chain crosses the membrane as a helical span at residues 122–138 (CLLLLVAIVGFQVLNAI). 194 to 201 (GPSGVGKS) is a binding site for ATP.

This sequence belongs to the ClpA/ClpB family. Torsin subfamily.

It is found in the membrane. In Homo sapiens (Human), this protein is Torsin-4A (TOR4A).